We begin with the raw amino-acid sequence, 545 residues long: Luciferin 4-monooxygenase (545 aa).

Positions 543–545 (SKL) match the Microbody targeting signal motif.

Belongs to the ATP-dependent AMP-binding enzyme family. Requires Mg(2+) as cofactor.

It is found in the peroxisome. The catalysed reaction is firefly D-luciferin + ATP + O2 = firefly oxyluciferin + hnu + AMP + CO2 + diphosphate. Functionally, produces green light with a wavelength of 562 nm. The polypeptide is Luciferin 4-monooxygenase (Photuris pensylvanica (Pennsylania firefly)).